Here is a 299-residue protein sequence, read N- to C-terminus: Leucine zipper transcription factor-like protein 1 (299 aa).

Positions 96–296 (LKLQTDISEL…DLRKRLAKYE (201 aa)) form a coiled coil. The interaction with BSS9 stretch occupies residues 145-299 (GAAELLNKEI…KRLAKYEPED (155 aa)).

This sequence belongs to the LZTFL1 family. In terms of assembly, self-associates. Interacts with BBS9; the interaction mediates the association of LZTL1 with the BBsome complex and regulates BBSome ciliary trafficking.

It is found in the cytoplasm. Functionally, regulates ciliary localization of the BBSome complex. Together with the BBSome complex, controls SMO ciliary trafficking and contributes to the sonic hedgehog (SHH) pathway regulation. May play a role in neurite outgrowth. May have tumor suppressor function. In Bos taurus (Bovine), this protein is Leucine zipper transcription factor-like protein 1 (LZTFL1).